The chain runs to 379 residues: Leukocyte elastase inhibitor (379 aa).

An N-acetylmethionine modification is found at M1. N6-acetyllysine occurs at positions 137 and 177. A CARD-binding motif (CBM) region spans residues 351–379 (NFNADHPFIFFIRHNPSANILFLGRFSSP).

It belongs to the serpin family. Ov-serpin subfamily. Monomer. Interacts (via C-terminus) with CASP1; CASP4 (via CARD domain) and CASP5; these interactions regulate the activity of inflammatory caspases. Interacts with PRTN3. Interacts with GZMH. Interacts with TMSB4. In terms of processing, the N-terminus is blocked.

It localises to the secreted. Its subcellular location is the cytoplasm. The protein resides in the cytolytic granule. The protein localises to the early endosome. Neutrophil serine protease inhibitor that plays an essential role in the regulation of the innate immune response, inflammation and cellular homeostasis. Acts primarily to protect the cell from proteases released in the cytoplasm during stress or infection. These proteases are important in killing microbes but when released from granules, these potent enzymes also destroy host proteins and contribute to mortality. Regulates the activity of the neutrophil proteases elastase, cathepsin G, proteinase-3, chymase, chymotrypsin, and kallikrein-3. Also acts as a potent intracellular inhibitor of GZMH by directly blocking its proteolytic activity. During inflammation, limits the activity of inflammatory caspases CASP1, CASP4 and CASP5 by suppressing their caspase-recruitment domain (CARD) oligomerization and enzymatic activation. When secreted, promotes the proliferation of beta-cells via its protease inhibitory function. The sequence is that of Leukocyte elastase inhibitor (SERPINB1) from Equus caballus (Horse).